A 507-amino-acid chain; its full sequence is Maturase K (507 aa).

The protein belongs to the intron maturase 2 family. MatK subfamily.

Its subcellular location is the plastid. The protein localises to the chloroplast. Usually encoded in the trnK tRNA gene intron. Probably assists in splicing its own and other chloroplast group II introns. This chain is Maturase K, found in Craterostigma plantagineum (Blue gem).